We begin with the raw amino-acid sequence, 64 residues long: U6-theraphotoxin-Cg1a (64 aa).

Residues 1–20 form the signal peptide; that stretch reads MTRKILAVLLVFTLVACNNA. Residues 21 to 38 constitute a propeptide that is removed on maturation; it reads EKYSETDVEDSPMIQERR. Intrachain disulfides connect Cys39–Cys55, Cys46–Cys58, and Cys54–Cys63.

It belongs to the neurotoxin 36 family. 02 subfamily. In terms of tissue distribution, expressed by the venom gland.

The protein resides in the secreted. Probable ion channel inhibitor. The polypeptide is U6-theraphotoxin-Cg1a (Chilobrachys guangxiensis (Chinese earth tiger tarantula)).